The primary structure comprises 264 residues: Apolipoprotein A-I (264 aa).

Positions 1–18 (MKAVVLTVAVLFLTGSQA) are cleaved as a signal peptide. 2 repeat units span residues 67-88 (LKLLDNWDTLGSSISKLREQLG) and 89-110 (PVTQEFWDNLEKDTEWLRQEMN). Residues 67-264 (LKLLDNWDTL…DDAAKKLSSQ (198 aa)) are 10 X approximate tandem repeats. Methionine 109 is subject to Methionine sulfoxide. Residues 111 to 121 (KDLEEVKQKVQ) form a 3; half-length repeat. A run of 3 repeats spans residues 122-143 (PYLEEFQKKWQEEVERYRQKVE), 144-165 (PLSTELREGARQKLQELQEKLT), and 166-187 (PLGEELRDHARTHVDVLRTQLA). One copy of the 7; truncated repeat lies at 188 to 207 (PYSDKMRERLAERLTALKDS). Methionine 193 bears the Methionine sulfoxide mark. Residues 208–229 (ASFAEYHAKASEHLKTLREKAK) form repeat 8. A 9; half-length repeat occupies 230-240 (PAIEDLGQGLL). Repeat unit 10 spans residues 241 to 264 (PVLENLKASFLSAIDDAAKKLSSQ).

The protein belongs to the apolipoprotein A1/A4/E family. As to quaternary structure, homodimer. Interacts with APOA1BP and CLU. Component of a sperm activating protein complex (SPAP), consisting of APOA1, an immunoglobulin heavy chain, an immunoglobulin light chain and albumin. Interacts with NDRG1. Interacts with SCGB3A2. Interacts with NAXE and YJEFN3. In terms of processing, glycosylated. Post-translationally, palmitoylated. Phosphorylation sites are present in the extracellular medium.

It is found in the secreted. Its function is as follows. Participates in the reverse transport of cholesterol from tissues to the liver for excretion by promoting cholesterol efflux from tissues and by acting as a cofactor for the lecithin cholesterol acyltransferase (LCAT). As part of the SPAP complex, activates spermatozoa motility. This is Apolipoprotein A-I (APOA1) from Castor canadensis (American beaver).